The chain runs to 413 residues: Protein LAZY 1 (413 aa).

The helical transmembrane segment at 71–91 (FTFGGSGLLTIGTLGIAAVAV) threads the bilayer. Acidic residues predominate over residues 103 to 124 (DADADSDFDDNDDTAGDDEDQV). 2 disordered regions span residues 103–127 (DADA…VDSA) and 261–308 (EDGG…ASAT). 2 consecutive short sequence motifs (nuclear localization signal) follow at residues 275–298 (RKAG…EKVP) and 338–345 (KKSRKRGS).

Belongs to the LAZY family. As to expression, expressed in the node of the stem, initiating leaf founder cells, young leaf primordia, tips of axillary meristems, spikelet pair meristems of developing tassels and ears, male flower primordia, tassels, ears, silks and seeds. Expressed in leaf sheaths, leaf pulvinus and shoot apical meristem (SAM).

It is found in the cell membrane. Its subcellular location is the nucleus. In terms of biological role, involved in the regulation of shoot gravitropism, and tassel and ear development through the regulation of polar auxin transport (PAT) and auxin signaling. Acts as a negative regulator of basipetal PAT, but positive regulator of lateral auxin transport. Involved in the regulation of shoot gravitropism and leaf angle through the regulation of cell development. This is Protein LAZY 1 from Zea mays (Maize).